We begin with the raw amino-acid sequence, 124 residues long: MPILVVLTLMSSGEIMASSLVLPKVGDLSGQWQLQLNVSGAKICDIELKNTPITPDLIWHASGDTDCLSQLLGSAPQGWRPTPDGIMLTDETGSAVAFFERAQNGYENTLPDDAGVIVLRRVQE.

The N-terminal stretch at 1-17 is a signal peptide; sequence MPILVVLTLMSSGEIMA. A disulfide bridge links Cys-44 with Cys-67.

It belongs to the protease inhibitor I38 family.

The protein resides in the periplasm. Its function is as follows. Inhibitor of the alkaline protease. This Yersinia ruckeri protein is Alkaline proteinase inhibitor (inh).